A 361-amino-acid chain; its full sequence is Phosphoserine aminotransferase (361 aa).

Arg43 is an L-glutamate binding site. 4 residues coordinate pyridoxal 5'-phosphate: Trp103, Thr153, Asp173, and Gln196. Lys197 carries the post-translational modification N6-(pyridoxal phosphate)lysine. 238 to 239 (NT) is a binding site for pyridoxal 5'-phosphate.

This sequence belongs to the class-V pyridoxal-phosphate-dependent aminotransferase family. SerC subfamily. As to quaternary structure, homodimer. Requires pyridoxal 5'-phosphate as cofactor.

The protein resides in the cytoplasm. It catalyses the reaction O-phospho-L-serine + 2-oxoglutarate = 3-phosphooxypyruvate + L-glutamate. It carries out the reaction 4-(phosphooxy)-L-threonine + 2-oxoglutarate = (R)-3-hydroxy-2-oxo-4-phosphooxybutanoate + L-glutamate. It functions in the pathway amino-acid biosynthesis; L-serine biosynthesis; L-serine from 3-phospho-D-glycerate: step 2/3. It participates in cofactor biosynthesis; pyridoxine 5'-phosphate biosynthesis; pyridoxine 5'-phosphate from D-erythrose 4-phosphate: step 3/5. In terms of biological role, catalyzes the reversible conversion of 3-phosphohydroxypyruvate to phosphoserine and of 3-hydroxy-2-oxo-4-phosphonooxybutanoate to phosphohydroxythreonine. The chain is Phosphoserine aminotransferase from Hahella chejuensis (strain KCTC 2396).